Reading from the N-terminus, the 57-residue chain is UPF0391 membrane protein NE0130 (57 aa).

The next 2 helical transmembrane spans lie at 1–21 (MLKW…FGFR) and 33–53 (FLFF…LLGI).

This sequence belongs to the UPF0391 family.

It localises to the cell membrane. The polypeptide is UPF0391 membrane protein NE0130 (Nitrosomonas europaea (strain ATCC 19718 / CIP 103999 / KCTC 2705 / NBRC 14298)).